We begin with the raw amino-acid sequence, 280 residues long: Small ribosomal subunit protein uS3 (280 aa).

In terms of domain architecture, KH type-2 spans 38–106 (IRRLLSTGLE…QVQLNILEVR (69 aa)). The tract at residues 215 to 280 (AAAAPAGAER…PAAEPQSTES (66 aa)) is disordered. Over residues 238-280 (SGASGTTATGTEAGRAAASADESTAAGQPAEAAPAAEPQSTES) the composition is skewed to low complexity.

The protein belongs to the universal ribosomal protein uS3 family. Part of the 30S ribosomal subunit. Forms a tight complex with proteins S10 and S14.

Binds the lower part of the 30S subunit head. Binds mRNA in the 70S ribosome, positioning it for translation. The polypeptide is Small ribosomal subunit protein uS3 (Mycolicibacterium paratuberculosis (strain ATCC BAA-968 / K-10) (Mycobacterium paratuberculosis)).